An 888-amino-acid polypeptide reads, in one-letter code: Calcium-transporting ATPase 1 (888 aa).

4 helical membrane-spanning segments follow: residues 53-75, 79-97, 246-266, and 283-303; these read IFAQINDVLVYVLIIAALISAFV, ADASIIALVVVLNAVIGVV, VGKYLGFVAVAICIVMFLIGF, and AVAAIPEGLPAIVSIVLAIGV. Residues valine 284, alanine 285, isoleucine 287, and glutamate 289 each coordinate Ca(2+). Aspartate 331 (4-aspartylphosphate intermediate) is an active-site residue. The next 6 helical transmembrane spans lie at 675-695, 703-723, 747-767, 791-811, 831-851, and 865-885; these read ILFLLSCNFGEIITLFLAILL, PIHILWVNLITDTLPALSLGV, VPFLIFNGVVIGLLTLIAFIA, LLHAQTMAFVVLSFSQLVHSF, LVFSLLIGVLMQVCIISIPPL, and WGFVLLLSIIPLVVNEIIKLA. Residues asparagine 710 and aspartate 714 each contribute to the Ca(2+) site.

It belongs to the cation transport ATPase (P-type) (TC 3.A.3) family. Type IIA subfamily.

The protein resides in the cell membrane. The catalysed reaction is Ca(2+)(in) + ATP + H2O = Ca(2+)(out) + ADP + phosphate + H(+). Inhibited by cyclopiazonic acid (CPA). In terms of biological role, catalyzes the hydrolysis of ATP coupled with the transport of calcium. This Bacillus cereus (strain ATCC 10987 / NRS 248) protein is Calcium-transporting ATPase 1.